A 271-amino-acid chain; its full sequence is Elongation factor Ts (271 aa).

Residues 76 to 79 form an involved in Mg(2+) ion dislocation from EF-Tu region; the sequence is TDFV.

This sequence belongs to the EF-Ts family.

The protein localises to the cytoplasm. Its function is as follows. Associates with the EF-Tu.GDP complex and induces the exchange of GDP to GTP. It remains bound to the aminoacyl-tRNA.EF-Tu.GTP complex up to the GTP hydrolysis stage on the ribosome. The protein is Elongation factor Ts of Mycobacterium ulcerans (strain Agy99).